The sequence spans 1235 residues: ATP-dependent DNA helicase mph1 (1235 aa).

Disordered stretches follow at residues 20-78 (LTQA…YRIH) and 96-148 (DEMP…VHSP). Residues 61–72 (SRSDNDEADEKK) show a composition bias toward basic and acidic residues. Positions 137-148 (AKTQKQNIVHSP) are enriched in polar residues. Residues 272–440 (IVHKGLFNNL…EVIDNLEIAE (169 aa)) form the Helicase ATP-binding domain. Residue 285–292 (LPTGLGKT) participates in ATP binding. Positions 388-391 (DEAH) match the DEAH box motif. Residues 608–784 (KLTYLCDTVL…GSRFTFRHDL (177 aa)) form the Helicase C-terminal domain. 3 disordered regions span residues 808–827 (NTQD…RKKL), 944–1117 (SRLQ…PPLM), and 1144–1235 (TGAK…DSDE). Residues 947 to 958 (QRPEDRDNKPYG) are compositionally biased toward basic and acidic residues. Positions 1015 to 1027 (VAPKKAKPRRGRA) are enriched in basic residues. Residues 1065 to 1074 (PGERVDRTSD) show a composition bias toward basic and acidic residues. Residues 1075 to 1085 (MEELEADDDSD) are compositionally biased toward acidic residues. Composition is skewed to polar residues over residues 1095–1114 (PTQT…SSSP) and 1146–1159 (AKNS…MTQE). Low complexity predominate over residues 1160–1170 (SSDGGDSMDSD). A compositionally biased stretch (polar residues) spans 1194 to 1209 (PSSSVFSSGQKATPNM).

This sequence belongs to the DEAD box helicase family. DEAH subfamily. FANCM sub-subfamily. As to quaternary structure, interacts with the MHF histone-fold complex to form the FANCM-MHF complex.

It is found in the nucleus. It carries out the reaction ATP + H2O = ADP + phosphate + H(+). Its function is as follows. ATP-dependent DNA helicase involved in DNA damage repair by homologous recombination and in genome maintenance. Capable of unwinding D-loops. Plays a role in limiting crossover recombinants during mitotic DNA double-strand break (DSB) repair. Component of a FANCM-MHF complex which promotes gene conversion at blocked replication forks, probably by reversal of the stalled fork. This is ATP-dependent DNA helicase mph1 from Sclerotinia sclerotiorum (strain ATCC 18683 / 1980 / Ss-1) (White mold).